Consider the following 99-residue polypeptide: Prostate and testis expressed protein 14 (99 aa).

Residues 1–21 form the signal peptide; sequence MEKYLLLLLLGIFLRVGFLQA. Residues 22–99 form the UPAR/Ly6 domain; that stretch reads LTCVSCGRLN…CDHQNLCNKP (78 aa). 5 cysteine pairs are disulfide-bonded: cysteine 24/cysteine 51, cysteine 27/cysteine 36, cysteine 43/cysteine 69, cysteine 73/cysteine 89, and cysteine 90/cysteine 96. N-linked (GlcNAc...) asparagine glycosylation is present at asparagine 31. Asparagine 75 carries N-linked (GlcNAc...) asparagine glycosylation.

The protein belongs to the PATE family. Monomer. In terms of processing, glycosylated. As to expression, predominantly expressed in the seminal vesicles. Expressed in prostate, and to a lesser extent in the cauda epididymis.

It localises to the secreted. The polypeptide is Prostate and testis expressed protein 14 (Mus musculus (Mouse)).